The sequence spans 234 residues: Small ribosomal subunit protein uS3 (234 aa).

A KH type-2 domain is found at 39–107; it reads IRKFLKKELY…EVSINIKEVK (69 aa).

The protein belongs to the universal ribosomal protein uS3 family. Part of the 30S ribosomal subunit. Forms a tight complex with proteins S10 and S14.

Functionally, binds the lower part of the 30S subunit head. Binds mRNA in the 70S ribosome, positioning it for translation. The sequence is that of Small ribosomal subunit protein uS3 from Helicobacter pylori (strain G27).